The chain runs to 363 residues: Cytochrome b (363 aa).

The next 4 membrane-spanning stretches (helical) occupy residues 23-43 (VGFI…LLTF), 67-89 (WFVR…IHII), 102-122 (SWYS…TGYV), and 164-184 (FFIL…LHLY). Heme b contacts are provided by His73 and His87. Residues His168 and His182 each coordinate heme b. An a ubiquinone-binding site is contributed by His187. The next 4 helical transmembrane spans lie at 210-230 (ILFS…PQVG), 271-291 (VFPT…LLII), 309-329 (RVWT…GCIG), and 332-352 (VINL…TTFV).

The protein belongs to the cytochrome b family. In terms of assembly, the main subunits of complex b-c1 are: cytochrome b, cytochrome c1 and the Rieske protein. Heme b is required as a cofactor.

It is found in the mitochondrion inner membrane. Its function is as follows. Component of the ubiquinol-cytochrome c reductase complex (complex III or cytochrome b-c1 complex) that is part of the mitochondrial respiratory chain. The b-c1 complex mediates electron transfer from ubiquinol to cytochrome c. Contributes to the generation of a proton gradient across the mitochondrial membrane that is then used for ATP synthesis. This Theileria parva (East coast fever infection agent) protein is Cytochrome b (MT-CYB).